Here is a 125-residue protein sequence, read N- to C-terminus: Small ribosomal subunit protein uS13 (125 aa).

The interval 93 to 125 (RSLPVRGQRTRTNARTRKGKRKTVAGKKKAGKK) is disordered.

It belongs to the universal ribosomal protein uS13 family. As to quaternary structure, part of the 30S ribosomal subunit. Forms a loose heterodimer with protein S19. Forms two bridges to the 50S subunit in the 70S ribosome.

Located at the top of the head of the 30S subunit, it contacts several helices of the 16S rRNA. In the 70S ribosome it contacts the 23S rRNA (bridge B1a) and protein L5 of the 50S subunit (bridge B1b), connecting the 2 subunits; these bridges are implicated in subunit movement. Contacts the tRNAs in the A and P-sites. This Chlorobaculum tepidum (strain ATCC 49652 / DSM 12025 / NBRC 103806 / TLS) (Chlorobium tepidum) protein is Small ribosomal subunit protein uS13.